Consider the following 363-residue polypeptide: Phosphoserine aminotransferase (363 aa).

R42 contacts L-glutamate. Pyridoxal 5'-phosphate contacts are provided by residues 76-77, W104, T155, D175, and Q198; that span reads AR. K199 carries the post-translational modification N6-(pyridoxal phosphate)lysine. Residue 240–241 participates in pyridoxal 5'-phosphate binding; the sequence is NT.

Belongs to the class-V pyridoxal-phosphate-dependent aminotransferase family. SerC subfamily. In terms of assembly, homodimer. It depends on pyridoxal 5'-phosphate as a cofactor.

The protein localises to the cytoplasm. The enzyme catalyses O-phospho-L-serine + 2-oxoglutarate = 3-phosphooxypyruvate + L-glutamate. The catalysed reaction is 4-(phosphooxy)-L-threonine + 2-oxoglutarate = (R)-3-hydroxy-2-oxo-4-phosphooxybutanoate + L-glutamate. It participates in amino-acid biosynthesis; L-serine biosynthesis; L-serine from 3-phospho-D-glycerate: step 2/3. It functions in the pathway cofactor biosynthesis; pyridoxine 5'-phosphate biosynthesis; pyridoxine 5'-phosphate from D-erythrose 4-phosphate: step 3/5. Catalyzes the reversible conversion of 3-phosphohydroxypyruvate to phosphoserine and of 3-hydroxy-2-oxo-4-phosphonooxybutanoate to phosphohydroxythreonine. The chain is Phosphoserine aminotransferase (serC) from Edwardsiella ictaluri (strain 93-146).